The sequence spans 288 residues: ATP synthase gamma chain (288 aa).

It belongs to the ATPase gamma chain family. As to quaternary structure, F-type ATPases have 2 components, CF(1) - the catalytic core - and CF(0) - the membrane proton channel. CF(1) has five subunits: alpha(3), beta(3), gamma(1), delta(1), epsilon(1). CF(0) has three main subunits: a, b and c.

Its subcellular location is the cell inner membrane. Functionally, produces ATP from ADP in the presence of a proton gradient across the membrane. The gamma chain is believed to be important in regulating ATPase activity and the flow of protons through the CF(0) complex. This is ATP synthase gamma chain from Actinobacillus pleuropneumoniae serotype 5b (strain L20).